The sequence spans 595 residues: Chaperone protein HscA homolog (595 aa).

It belongs to the heat shock protein 70 family.

In terms of biological role, chaperone involved in the maturation of iron-sulfur cluster-containing proteins. Has a low intrinsic ATPase activity which is markedly stimulated by HscB. The polypeptide is Chaperone protein HscA homolog (Rickettsia peacockii (strain Rustic)).